The primary structure comprises 443 residues: MIQSSSSISQDSLDLPSILSTFSADEPEDEPSPTAVKSTKPQRPTECLICGNSANGHHYDVASCNGCKTFFRRMCVSDRSFECKAKGDCFDLTKRKVPLKCRACRHQKCISVGMNPLAMEVDEKAASSSNFKKLVKRAQDLEPDDDCQVTAVVNKMQIVKPVDSIESKMQNITDMLVYLETKVERFRKSAYNPHWNEFSGLEYLLESECRIGFGDRFGPMPGWPLRRDQLGPPRLPKPPSPGKPRDSQHSQNIKQWFFYNLLTTVEYAKTFMFFHRLSSRDKLILTRHVALACTNLHISYSSIRRNLEVIIEPDGSEPMTFNDTHYSASVMSVAPLIRCQIKNIEYLLLKAIVLCNPAVPDLSAKSQEIISLERVKYADALFNYCLRSRSDGPPHFAQLIQIIDVLERQQRMQKDLHLLLVAPKVAKLPKDLVMRVIEDIMDS.

Positions Met1–Ser20 are enriched in low complexity. The interval Met1–Lys40 is disordered. The segment at residues Pro44–Val121 is a DNA-binding region (nuclear receptor). NR C4-type zinc fingers lie at residues Cys47 to Cys67 and Cys83 to Cys104. In terms of domain architecture, NR LBD spans Asn196–Asp439. The disordered stretch occupies residues Leu225–His249. Pro residues predominate over residues Pro233–Gly242.

The protein belongs to the nuclear hormone receptor family.

It localises to the nucleus. Its function is as follows. Orphan nuclear receptor (Potential). Required for embryonic and larval morphogenesis and probably for seam cell positioning and migration. In Caenorhabditis elegans, this protein is Nuclear hormone receptor family member nhr-60.